Reading from the N-terminus, the 665-residue chain is MNNGVRKKVTLAGLLVSIGIVYGDIGTSPLYVMKAIVNENGGIASVNREYIVGSISLILWTITLLTTVKYVLIALKATNHGEGGIFSLYALVRKKAKWLVLPALIGGAALLADGTLTPAVTVTTAIEGLKNMRFGNDIPVPNQNSVLIITIIILLFLFSIQRMGTSIIGKTFGPIMLIWFTFLGLTGAMNLSHDLSLLEALNPVLAVKILFSPANKVGVLILGAVFLATTGAEALYSDVGHVGKGNIMASWPYVFICLALNYLGQGVWILENPNYHAGNTDFNPFFEALPSQWKFFAIILATLAAIIASQALITGSFTLVSEASGLKFLPRMKIIYPSTEQGQIFIPSINKMLCAATIGIVFLFKTSEHMEAAYGLAITVTMLMTTILLFEYLSLKKVNILLRLVFLFLFGAIESMFLISSLAKFLHGGYVTVIIAAFIGAIMYIWYFGNKVRDRREAKNAYVRLDEYTSMLSNLSHDDSVPLYATNLVYMAKVKYNKFIKRDILYSILDKRPKRAHAYWFVTVNVTNEPFTAEYAINTYGTKNVINVQLYLGFKQQQKVNVYLRQIVHELIKDGTIESQPQEYTTTPGRDVGDFKFVIVNDVISPQTQLNTYEKWLVESRVWLQNLSSNPAVWFGLEYADTVVERVPLILGSQNIKSIQRTKLK.

Helical transmembrane passes span 13 to 33 (GLLVSIGIVYGDIGTSPLYVM), 55 to 75 (ISLILWTITLLTTVKYVLIAL), 98 to 118 (WLVLPALIGGAALLADGTLTP), 138 to 158 (IPVPNQNSVLIITIIILLFLF), 167 to 187 (IIGKTFGPIMLIWFTFLGLTG), 195 to 215 (LSLLEALNPVLAVKILFSPAN), 217 to 237 (VGVLILGAVFLATTGAEALYS), 250 to 270 (SWPYVFICLALNYLGQGVWIL), 295 to 315 (FFAIILATLAAIIASQALITG), 344 to 364 (IFIPSINKMLCAATIGIVFLF), 375 to 395 (GLAITVTMLMTTILLFEYLSL), 400 to 420 (ILLRLVFLFLFGAIESMFLIS), and 428 to 448 (GGYVTVIIAAFIGAIMYIWYF).

The protein belongs to the HAK/KUP transporter (TC 2.A.72) family.

The protein localises to the cell membrane. The catalysed reaction is K(+)(in) + H(+)(in) = K(+)(out) + H(+)(out). Functionally, transport of potassium into the cell. Likely operates as a K(+):H(+) symporter. The sequence is that of Probable potassium transport system protein Kup 2 from Lactobacillus johnsonii (strain CNCM I-12250 / La1 / NCC 533).